The sequence spans 148 residues: Lysozyme C (148 aa).

The first 18 residues, 1–18 (MKALIILGLVLLSVTVQG), serve as a signal peptide directing secretion. In terms of domain architecture, C-type lysozyme spans 19 to 148 (KIFERCELAR…VSQYVEGCGV (130 aa)). Cystine bridges form between Cys-24–Cys-146, Cys-48–Cys-134, Cys-83–Cys-99, and Cys-95–Cys-113. Catalysis depends on residues Glu-53 and Asp-71.

Belongs to the glycosyl hydrolase 22 family. In terms of assembly, monomer.

The enzyme catalyses Hydrolysis of (1-&gt;4)-beta-linkages between N-acetylmuramic acid and N-acetyl-D-glucosamine residues in a peptidoglycan and between N-acetyl-D-glucosamine residues in chitodextrins.. Its function is as follows. Lysozymes have primarily a bacteriolytic function; those in tissues and body fluids are associated with the monocyte-macrophage system and enhance the activity of immunoagents. The protein is Lysozyme C (LYZ) of Colobus angolensis (Angolan colobus).